The chain runs to 186 residues: Interferon lambda-3 (186 aa).

An N-terminal signal peptide occupies residues 1-21 (MVCYGVTIILVGTLGSLLVGA). Disulfide bonds link Cys-31-Cys-128, Cys-65-Cys-160, and Cys-178-Cys-185.

The protein belongs to the lambda interferon family.

The protein localises to the secreted. Its function is as follows. Cytokine which plays a critical role in the antiviral host defense, predominantly in the epithelial tissues. Acts as a ligand for the heterodimeric class II cytokine receptor composed of IL10RB and IFNLR1, and receptor engagement leads to the activation of the JAK/STAT signaling pathway resulting in the expression of IFN-stimulated genes (ISG), which mediate the antiviral state. Has a restricted receptor distribution and therefore restricted targets: is primarily active in epithelial cells and this cell type-selective action is because of the epithelial cell-specific expression of its receptor IFNLR1. Exhibits antiviral activity against the H5N1 influenza A virus. Induces the expression of the antiviral MX protein in epithelial-rich tissues, such as intestine, trachea and lung. In Gallus gallus (Chicken), this protein is Interferon lambda-3 (IFNL3).